The sequence spans 308 residues: tRNA dimethylallyltransferase 1 (308 aa).

ATP is bound at residue 9–16 (GPTGVGKT). 11 to 16 (TGVGKT) is a substrate binding site. The interaction with substrate tRNA stretch occupies residues 34 to 37 (DSRQ).

Belongs to the IPP transferase family. Monomer. Mg(2+) serves as cofactor.

It carries out the reaction adenosine(37) in tRNA + dimethylallyl diphosphate = N(6)-dimethylallyladenosine(37) in tRNA + diphosphate. Functionally, catalyzes the transfer of a dimethylallyl group onto the adenine at position 37 in tRNAs that read codons beginning with uridine, leading to the formation of N6-(dimethylallyl)adenosine (i(6)A). The chain is tRNA dimethylallyltransferase 1 from Bacteroides thetaiotaomicron (strain ATCC 29148 / DSM 2079 / JCM 5827 / CCUG 10774 / NCTC 10582 / VPI-5482 / E50).